We begin with the raw amino-acid sequence, 159 residues long: Transcription elongation factor GreA (159 aa).

Residues 2–77 (EENKEFLLTQ…LENMVRKAVI (76 aa)) are a coiled coil.

The protein belongs to the GreA/GreB family.

Functionally, necessary for efficient RNA polymerase transcription elongation past template-encoded arresting sites. The arresting sites in DNA have the property of trapping a certain fraction of elongating RNA polymerases that pass through, resulting in locked ternary complexes. Cleavage of the nascent transcript by cleavage factors such as GreA or GreB allows the resumption of elongation from the new 3'terminus. GreA releases sequences of 2 to 3 nucleotides. The sequence is that of Transcription elongation factor GreA from Clostridioides difficile (strain 630) (Peptoclostridium difficile).